A 155-amino-acid polypeptide reads, in one-letter code: MKVEIDSFSGAKIYPGRGTLFVRGDSKIFRFQSSKSASLFHQRKNPRRIAWTVLYRRHHKKGITEEVARKRTRKSVKAQRAVVGASLELIKERRSLKPEVRKAQRDEKKKADKEKKKADKAARKSEKAKLAAAQGSKVSKQQAKGAFQKVAATSR.

The segment covering 94–129 (RSLKPEVRKAQRDEKKKADKEKKKADKAARKSEKAK) has biased composition (basic and acidic residues). Residues 94-155 (RSLKPEVRKA…AFQKVAATSR (62 aa)) are disordered.

The protein belongs to the eukaryotic ribosomal protein eL24 family.

The polypeptide is Large ribosomal subunit protein eL24 (RPL24) (Kluyveromyces lactis (strain ATCC 8585 / CBS 2359 / DSM 70799 / NBRC 1267 / NRRL Y-1140 / WM37) (Yeast)).